Here is a 200-residue protein sequence, read N- to C-terminus: NADH-quinone oxidoreductase subunit C (200 aa).

This sequence belongs to the complex I 30 kDa subunit family. As to quaternary structure, NDH-1 is composed of 14 different subunits. Subunits NuoB, C, D, E, F, and G constitute the peripheral sector of the complex.

It is found in the cell inner membrane. The enzyme catalyses a quinone + NADH + 5 H(+)(in) = a quinol + NAD(+) + 4 H(+)(out). In terms of biological role, NDH-1 shuttles electrons from NADH, via FMN and iron-sulfur (Fe-S) centers, to quinones in the respiratory chain. The immediate electron acceptor for the enzyme in this species is believed to be ubiquinone. Couples the redox reaction to proton translocation (for every two electrons transferred, four hydrogen ions are translocated across the cytoplasmic membrane), and thus conserves the redox energy in a proton gradient. The protein is NADH-quinone oxidoreductase subunit C of Burkholderia thailandensis (strain ATCC 700388 / DSM 13276 / CCUG 48851 / CIP 106301 / E264).